Reading from the N-terminus, the 272-residue chain is Shikimate dehydrogenase (NADP(+)) (272 aa).

Residues 19 to 21 (SLS) and threonine 66 each bind shikimate. Lysine 70 functions as the Proton acceptor in the catalytic mechanism. Residue glutamate 82 coordinates NADP(+). Shikimate contacts are provided by asparagine 91 and aspartate 106. NADP(+)-binding positions include 129–133 (GAGGA), 151–156 (NRTPEK), and isoleucine 214. Tyrosine 216 contacts shikimate. Position 237 (glycine 237) interacts with NADP(+).

Belongs to the shikimate dehydrogenase family. Homodimer.

The enzyme catalyses shikimate + NADP(+) = 3-dehydroshikimate + NADPH + H(+). Its pathway is metabolic intermediate biosynthesis; chorismate biosynthesis; chorismate from D-erythrose 4-phosphate and phosphoenolpyruvate: step 4/7. Functionally, involved in the biosynthesis of the chorismate, which leads to the biosynthesis of aromatic amino acids. Catalyzes the reversible NADPH linked reduction of 3-dehydroshikimate (DHSA) to yield shikimate (SA). The polypeptide is Shikimate dehydrogenase (NADP(+)) (Thermococcus kodakarensis (strain ATCC BAA-918 / JCM 12380 / KOD1) (Pyrococcus kodakaraensis (strain KOD1))).